We begin with the raw amino-acid sequence, 207 residues long: LexA repressor (207 aa).

The segment at residues 28–48 (VREIAVAVGLASSSTVHGHLE) is a DNA-binding region (H-T-H motif). Active-site for autocatalytic cleavage activity residues include Ser129 and Lys167.

Belongs to the peptidase S24 family. As to quaternary structure, homodimer.

It catalyses the reaction Hydrolysis of Ala-|-Gly bond in repressor LexA.. Its function is as follows. Represses a number of genes involved in the response to DNA damage (SOS response), including recA and lexA. In the presence of single-stranded DNA, RecA interacts with LexA causing an autocatalytic cleavage which disrupts the DNA-binding part of LexA, leading to derepression of the SOS regulon and eventually DNA repair. This is LexA repressor from Oceanobacillus iheyensis (strain DSM 14371 / CIP 107618 / JCM 11309 / KCTC 3954 / HTE831).